The chain runs to 263 residues: Endonuclease 8 (263 aa).

Catalysis depends on P2, which acts as the Schiff-base intermediate with DNA. The Proton donor role is filled by E3. Residue K53 is the Proton donor; for beta-elimination activity of the active site. 3 residues coordinate DNA: Q70, R125, and N169. Residues 229–263 form an FPG-type zinc finger; it reads KVFHRDGELCERCGGIIEKTTLSSRPFYWCPGCQH. R253 functions as the Proton donor; for delta-elimination activity in the catalytic mechanism.

The protein belongs to the FPG family. It depends on Zn(2+) as a cofactor.

The catalysed reaction is 2'-deoxyribonucleotide-(2'-deoxyribose 5'-phosphate)-2'-deoxyribonucleotide-DNA = a 3'-end 2'-deoxyribonucleotide-(2,3-dehydro-2,3-deoxyribose 5'-phosphate)-DNA + a 5'-end 5'-phospho-2'-deoxyribonucleoside-DNA + H(+). Functionally, involved in base excision repair of DNA damaged by oxidation or by mutagenic agents. Acts as a DNA glycosylase that recognizes and removes damaged bases. Has a preference for oxidized pyrimidines, such as thymine glycol, 5,6-dihydrouracil and 5,6-dihydrothymine. Has AP (apurinic/apyrimidinic) lyase activity and introduces nicks in the DNA strand. Cleaves the DNA backbone by beta-delta elimination to generate a single-strand break at the site of the removed base with both 3'- and 5'-phosphates. This is Endonuclease 8 from Shigella boydii serotype 4 (strain Sb227).